The sequence spans 453 residues: Cytochrome P450 monooxygenase PC-20 (453 aa).

2 helical membrane passes run 5-25 (LGPFRTFTLLTVGLLLSLCVI) and 49-69 (LGVVLAEILASPEGFFHLFCV). Cysteine 387 contributes to the heme binding site.

Belongs to the cytochrome P450 family. The cofactor is heme.

It is found in the membrane. It functions in the pathway secondary metabolite biosynthesis. Its function is as follows. Cytochrome P450 monooxygenase; part of the gene cluster that mediates the biosynthesis of the indole diterpenes penitrems. The geranylgeranyl diphosphate (GGPP) synthase penG catalyzes the first step in penitrem biosynthesis via conversion of farnesyl pyrophosphate and isopentyl pyrophosphate into geranylgeranyl pyrophosphate (GGPP). Condensation of indole-3-glycerol phosphate with GGPP by the prenyl transferase penC then forms 3-geranylgeranylindole (3-GGI). Epoxidation by the FAD-dependent monooxygenase penM leads to a epoxidized-GGI that is substrate of the terpene cyclase penB for cyclization to yield paspaline. Paspaline is subsequently converted to 13-desoxypaxilline by the cytochrome P450 monooxygenase penP, the latter being then converted to paxilline by the cytochrome P450 monooxygenase penQ. Paxilline is converted to beta-paxitriol via C-10 ketoreduction by the short-chain dehydrogenase PC-15 which can be monoprenylated at the C-20 by the indole diterpene prenyltransferase penD. A two-step elimination (acetylation and elimination) process performed by the O-acetyltransferase PC-16 and the P.simplicissimum ptmI-ortholog not yet identified in P.crustosum, leads to the production of the prenylated form of penijanthine. The FAD-linked oxidoreductase ptmO then converts the prenylated form of penijanthine into PC-M5 which is in turn transformed into PC-M4 by the aromatic dimethylallyltransferase PC-22. A series of oxidation steps involving 4 cytochrome P450 monooxygenases (PC-21, PC-05, PC-23, PC-20) and a FAD-dependent monooxygenase (PC-14) are required for the transformation of PC-M4 to penitrems A and E. Synthesis of these final products is proposed to proceed via penitrems D and C (PC-21, PC-05, PC-14) and penitrems B and F (PC-21, PC-05, PC-14, PC-23). In Penicillium crustosum (Blue mold fungus), this protein is Cytochrome P450 monooxygenase PC-20.